The chain runs to 109 residues: Large ribosomal subunit protein uL22 (109 aa).

This sequence belongs to the universal ribosomal protein uL22 family. In terms of assembly, part of the 50S ribosomal subunit.

Functionally, this protein binds specifically to 23S rRNA; its binding is stimulated by other ribosomal proteins, e.g. L4, L17, and L20. It is important during the early stages of 50S assembly. It makes multiple contacts with different domains of the 23S rRNA in the assembled 50S subunit and ribosome. Its function is as follows. The globular domain of the protein is located near the polypeptide exit tunnel on the outside of the subunit, while an extended beta-hairpin is found that lines the wall of the exit tunnel in the center of the 70S ribosome. The protein is Large ribosomal subunit protein uL22 of Leptothrix cholodnii (strain ATCC 51168 / LMG 8142 / SP-6) (Leptothrix discophora (strain SP-6)).